Reading from the N-terminus, the 217-residue chain is MNGRACRILQEGAAELGVEISDELVTLFSLFADELKKWNRKINLTAITGDEEIALKHFVDSLALCRLVSGDDELLDLGSGGGFPVLPLALVFPTMTAVSVDAVEKKIIFQRHAARLLGCRRFEAIHARGEDLPRMLERRFNRIVSRAFSDIPSFARMALPLLMPQGTIIAMKGRGGAEEADAARGALEEMGLTVVRVTEYRLPFSGDARTLVEIGFC.

S-adenosyl-L-methionine contacts are provided by residues G78, F83, 129–130 (GE), and R146.

The protein belongs to the methyltransferase superfamily. RNA methyltransferase RsmG family.

The protein resides in the cytoplasm. The enzyme catalyses guanosine(527) in 16S rRNA + S-adenosyl-L-methionine = N(7)-methylguanosine(527) in 16S rRNA + S-adenosyl-L-homocysteine. Functionally, specifically methylates the N7 position of guanine in position 527 of 16S rRNA. The polypeptide is Ribosomal RNA small subunit methyltransferase G (Geobacter sulfurreducens (strain ATCC 51573 / DSM 12127 / PCA)).